Here is a 556-residue protein sequence, read N- to C-terminus: MSVSAFNRRWAAVILEALTRHGVRHICIAPGSRSTPLTLAAAENSAFIHHTHFDERGLGHLALGLAKVSKQPVAVIVTSGTAVANLYPALIEAGLTGEKLILLTADRPPELIDCGANQAIRQPGMFASHPTHSISLPRPTQDIPARWLVSTIDHALGTLHAGGVHINCPFAEPLYGEMDDTGISWQQRLGDWWQDDKPWLREAPRRESEKQRDWFFWRQKRGVVVAGRMSAEEGKKVALWAQTLGWPLIGDVLSQTGQPLPCADLWLGNAKATSELQQAQIVVQLGSSLTGKRLLQWQASCEPEEYWIVDDIEGRLDPAHHRGRRLIANIADWLELHPAEKRQPWCVEIPRLAEQAMQAVIARRDAFGEAQLAHRISDYLPEQGQLFVGNSLVVRLIDALSQLPAGYPVYSNRGASGIDGLLSTAAGAQRASGKPTLAIVGDLSALYDLNALALLRQVSAPLVLIVVNNNGGQIFSLLPTPKSERERFYLMPQNVHFEHAAAMFELKYHRPQNWQELETTLVDAWRTPTTTVIEMVVNDTDGAQTLQQLLAQVSHL.

It belongs to the TPP enzyme family. MenD subfamily. In terms of assembly, homodimer. Mg(2+) is required as a cofactor. It depends on Mn(2+) as a cofactor. Requires thiamine diphosphate as cofactor.

It carries out the reaction isochorismate + 2-oxoglutarate + H(+) = 5-enolpyruvoyl-6-hydroxy-2-succinyl-cyclohex-3-ene-1-carboxylate + CO2. It functions in the pathway quinol/quinone metabolism; 1,4-dihydroxy-2-naphthoate biosynthesis; 1,4-dihydroxy-2-naphthoate from chorismate: step 2/7. It participates in quinol/quinone metabolism; menaquinone biosynthesis. Functionally, catalyzes the thiamine diphosphate-dependent decarboxylation of 2-oxoglutarate and the subsequent addition of the resulting succinic semialdehyde-thiamine pyrophosphate anion to isochorismate to yield 2-succinyl-5-enolpyruvyl-6-hydroxy-3-cyclohexene-1-carboxylate (SEPHCHC). The protein is 2-succinyl-5-enolpyruvyl-6-hydroxy-3-cyclohexene-1-carboxylate synthase of Escherichia coli (strain UTI89 / UPEC).